A 300-amino-acid chain; its full sequence is Estradiol 17-beta-dehydrogenase 11 (300 aa).

Residues 1 to 18 (MKILLDLLLLLPLLIVCC) form the signal peptide. 40-67 (LITGAGHGIGRLTAYEFAKLKSKLVLWD) serves as a coordination point for NADP(+). Ser-172 provides a ligand contact to substrate. Catalysis depends on Tyr-185, which acts as the Proton acceptor. Lys-189 contacts NADP(+).

This sequence belongs to the short-chain dehydrogenases/reductases (SDR) family. 17-beta-HSD 3 subfamily.

It localises to the endoplasmic reticulum. It is found in the lipid droplet. It catalyses the reaction 17beta-estradiol + NAD(+) = estrone + NADH + H(+). The enzyme catalyses 17beta-estradiol + NADP(+) = estrone + NADPH + H(+). Can convert androstan-3-alpha,17-beta-diol (3-alpha-diol) to androsterone in vitro, suggesting that it may participate in androgen metabolism during steroidogenesis. May act by metabolizing compounds that stimulate steroid synthesis and/or by generating metabolites that inhibit it. Has no activity toward DHEA (dehydroepiandrosterone), or A-dione (4-androste-3,17-dione), and only a slight activity toward testosterone to A-dione. The polypeptide is Estradiol 17-beta-dehydrogenase 11 (HSD17B11) (Macaca fascicularis (Crab-eating macaque)).